The primary structure comprises 112 residues: Putative movement protein (112 aa).

A helical transmembrane segment spans residues 27–47; sequence IGIIMLCIVGIVVLWVLIILC. A disordered region spans residues 77-112; sequence TGTPFEETGPHRERRWAERRTEATNQNNNDNVNRFS. The segment covering 84–98 has biased composition (basic and acidic residues); the sequence is TGPHRERRWAERRTE. Positions 101–112 are enriched in polar residues; that stretch reads NQNNNDNVNRFS.

Belongs to the nanovirus movement protein family.

Its subcellular location is the host cell membrane. Its function is as follows. May transport viral genome to neighboring plant cells directly through plasmosdesmata, without any budding. The movement protein allows efficient cell to cell propagation, by bypassing the host cell wall barrier. This Subterranean clover stunt virus (strain F) (SCSV) protein is Putative movement protein (DNA-M).